The chain runs to 398 residues: Metallophosphoesterase 1 (398 aa).

Residues V25–F45 traverse the membrane as a helical segment. The a divalent metal cation site is built by D75, D117, N155, H251, H305, and H307. The chain crosses the membrane as a helical span at residues V359 to Q379. The short motif at K394–A398 is the Di-lysine motif element.

Belongs to the metallophosphoesterase superfamily. MPPE1 family. It depends on Mn(2+) as a cofactor.

It is found in the endoplasmic reticulum-Golgi intermediate compartment membrane. In terms of biological role, metallophosphoesterase that catalyzes the removal of a side-chain ethanolamine-phosphate (EtNP) from the second mannose of the GPI-anchor protein intermediate. Participates in the glycan remodeling steps of GPI-anchor maturation to allow an efficient transport of GPI-anchor proteins from the endoplasmic reticulum to the Golgi. The sequence is that of Metallophosphoesterase 1 from Gallus gallus (Chicken).